Reading from the N-terminus, the 73-residue chain is Large ribosomal subunit protein uL29 (73 aa).

The disordered stretch occupies residues 1 to 20 (MYKAKDLRDQSLEELEATHD).

This sequence belongs to the universal ribosomal protein uL29 family.

The protein is Large ribosomal subunit protein uL29 of Protochlamydia amoebophila (strain UWE25).